A 337-amino-acid chain; its full sequence is MANSC domain-containing protein 4 (337 aa).

A signal peptide spans M1–G18. Residues L19–G278 are Extracellular-facing. The MANSC domain maps to R33–Y113. N-linked (GlcNAc...) asparagine glycans are attached at residues N114, N227, and N251. Composition is skewed to polar residues over residues S216–I230 and T239–T260. Positions S216 to D277 are disordered. Residues A279–L299 traverse the membrane as a helical segment. Topologically, residues C300 to S337 are cytoplasmic. Residues R314–S337 are disordered.

The protein resides in the membrane. The chain is MANSC domain-containing protein 4 (Mansc4) from Mus musculus (Mouse).